Here is a 335-residue protein sequence, read N- to C-terminus: Urokinase plasminogen activator surface receptor (335 aa).

A signal peptide spans 1 to 22 (MGHPLLLPLLLLLHTCVPASWG). UPAR/Ly6 domains follow at residues 23–114 (LRCM…RSRY), 115–213 (LECI…PQNG), and 214–305 (HQCY…YRKG). 3 disulfide bridges follow: Cys25–Cys46, Cys28–Cys34, and Cys39–Cys67. Asn74 carries an N-linked (GlcNAc...) asparagine glycan. 11 cysteine pairs are disulfide-bonded: Cys93–Cys98, Cys117–Cys144, Cys120–Cys127, Cys137–Cys169, Cys175–Cys192, Cys193–Cys198, Cys216–Cys244, Cys219–Cys227, Cys237–Cys263, Cys269–Cys287, and Cys288–Cys293. N-linked (GlcNAc...) asparagine glycans are attached at residues Asn184, Asn194, Asn222, and Asn255. Gly305 carries the GPI-anchor amidated glycine lipid modification. The propeptide at 306 to 335 (AAPQPGPAHLSLTITLLMTARLWGGTLLWT) is removed in mature form.

In terms of assembly, monomer. Interacts (via the UPAR/Ly6 domains) with SRPX2. Interacts with MRC2. Interacts with FAP (seprase); the interaction occurs at the cell surface of invadopodia membrane. Interacts with SORL1 (via N-terminal ectodomain); this interaction decreases PLAUR internalization. The ternary complex composed of PLAUR-PLAU-SERPINE1 also interacts with SORL1.

The protein localises to the cell membrane. The protein resides in the cell projection. Its subcellular location is the invadopodium membrane. Its function is as follows. Acts as a receptor for urokinase plasminogen activator. Plays a role in localizing and promoting plasmin formation. Mediates the proteolysis-independent signal transduction activation effects of U-PA. It is subject to negative-feedback regulation by U-PA which cleaves it into an inactive form. The chain is Urokinase plasminogen activator surface receptor (PLAUR) from Chlorocebus aethiops (Green monkey).